A 208-amino-acid chain; its full sequence is MTPLALSMIIFAYLLGSISSAVLICRVLRLPDPRNVGSQNPGATNVLRIGGKKAAVAVLLCDMLKGTIPVWGGYFLNIEPFMLGLVAIAACLGHMYPIFFHFKGGKGVATALGAIAPIGLDLTAMVMATWLVVVVLFRYSSLAALVTVLLAPLYTWLIKPQYTLPVAMLCCLIVLRHHQNVKRLFAGTEPKVGEKNKKPSDDEESRVV.

The next 5 helical transmembrane spans lie at 4–24, 56–76, 80–100, 117–137, and 139–159; these read LALS…AVLI, VAVL…GYFL, PFML…PIFF, PIGL…VVLF, and YSSL…WLIK.

This sequence belongs to the PlsY family. In terms of assembly, probably interacts with PlsX.

The protein localises to the cell inner membrane. It carries out the reaction an acyl phosphate + sn-glycerol 3-phosphate = a 1-acyl-sn-glycero-3-phosphate + phosphate. It functions in the pathway lipid metabolism; phospholipid metabolism. Its function is as follows. Catalyzes the transfer of an acyl group from acyl-phosphate (acyl-PO(4)) to glycerol-3-phosphate (G3P) to form lysophosphatidic acid (LPA). This enzyme utilizes acyl-phosphate as fatty acyl donor, but not acyl-CoA or acyl-ACP. In Vibrio cholerae serotype O1 (strain ATCC 39541 / Classical Ogawa 395 / O395), this protein is Glycerol-3-phosphate acyltransferase.